Consider the following 441-residue polypeptide: Ubiquitin carboxyl-terminal hydrolase MINDY-3 (441 aa).

Catalysis depends on Cys51, which acts as the Nucleophile. The active-site Proton acceptor is His284.

This sequence belongs to the MINDY deubiquitinase family. FAM188 subfamily.

The protein localises to the nucleus. It carries out the reaction Thiol-dependent hydrolysis of ester, thioester, amide, peptide and isopeptide bonds formed by the C-terminal Gly of ubiquitin (a 76-residue protein attached to proteins as an intracellular targeting signal).. Its function is as follows. Hydrolase that can remove 'Lys-48'-linked conjugated ubiquitin from proteins. This is Ubiquitin carboxyl-terminal hydrolase MINDY-3 (mindy3) from Xenopus tropicalis (Western clawed frog).